Consider the following 204-residue polypeptide: Urease accessory protein UreG (204 aa).

13–20 (GPVGSGKT) contacts GTP.

This sequence belongs to the SIMIBI class G3E GTPase family. UreG subfamily. In terms of assembly, homodimer. UreD, UreF and UreG form a complex that acts as a GTP-hydrolysis-dependent molecular chaperone, activating the urease apoprotein by helping to assemble the nickel containing metallocenter of UreC. The UreE protein probably delivers the nickel.

It is found in the cytoplasm. Functionally, facilitates the functional incorporation of the urease nickel metallocenter. This process requires GTP hydrolysis, probably effectuated by UreG. The sequence is that of Urease accessory protein UreG from Acinetobacter baumannii (strain AB307-0294).